The primary structure comprises 787 residues: Lysine-specific demethylase JMJ13 (787 aa).

In terms of domain architecture, JmjN spans 103-144 (CPVYRPTKEEFEDPLTYLQKIFPEASKYGICKIVSPLTATVP). The region spanning 250 to 420 (SSKWNLNKVS…FGAIASCRYA (171 aa)) is the JmjC domain. Residues His-293, Glu-295, and His-388 each coordinate Fe cation. Residues Cys-500, Cys-503, Cys-514, Cys-516, His-519, Cys-522, His-525, and Cys-534 each contribute to the Zn(2+) site. A C4HCHC zinc finger spans residues 500 to 551 (CSLCKRDCYLAFINCECYSHPVCLRHDVKKLDLPCGTTHTLYLRDNIEDMEA). A C5HC2 zinc finger spans residues 500 to 551 (CSLCKRDCYLAFINCECYSHPVCLRHDVKKLDLPCGTTHTLYLRDNIEDMEA). The FYR N-terminal domain maps to 617-675 (VMSYEANASCISSVADDYECSDYVNRRANCSSSSDSKLSEEVACSSSKKTRFFPVVQDE). The region spanning 677–756 (LVADQESDGS…ELVISNRKET (80 aa)) is the FYR C-terminal domain. Residues 712 to 769 (ESDHHQELKRLKKSHHHEGRYSSSSSVSRQEEEEDELVISNRKETQQQSDVKMQKKRI) are disordered. Residues 752 to 759 (NRKETQQQ) carry the Nuclear localization signal motif.

This sequence belongs to the JARID1 histone demethylase family. Fe(2+) serves as cofactor. Mostly expressed in leaves, and, to a lower extent, in inflorescences, roots, siliques and stems.

The protein localises to the nucleus. It carries out the reaction N(6),N(6),N(6)-trimethyl-L-lysyl(27)-[histone H3] + 2-oxoglutarate + O2 = N(6),N(6)-dimethyl-L-lysyl(27)-[histone H3] + formaldehyde + succinate + CO2. Histone demethylase that demethylates 'Lys-27' (H3K27me) of histone H3 with a specific activity for H3K27me3 and involved in the regulation of gene expression. Acts as a temperature and photoperiod dependent flowering repressor. This chain is Lysine-specific demethylase JMJ13, found in Arabidopsis thaliana (Mouse-ear cress).